We begin with the raw amino-acid sequence, 551 residues long: Podocalyxin (551 aa).

A signal peptide spans 1–21; sequence MRSALALAALLLLLLSPPSLS. The disordered stretch occupies residues 18-324; that stretch reads PSLSQEKSPQ…QRVSCGPPER (307 aa). Residues 22–452 lie on the Extracellular side of the membrane; the sequence is QEKSPQPGPT…PPEETEDRFS (431 aa). The segment covering 32-59 has biased composition (low complexity); the sequence is PMATSTSTRPAPASAPAPKSSVAASVPA. The span at 60 to 90 shows a compositional bias: polar residues; that stretch reads EQNTTPMTTKAPATQSPSASPGSSVENSAPA. The span at 91–104 shows a compositional bias: low complexity; that stretch reads QGSTTTQQSLSVTT. Positions 142 to 164 are enriched in polar residues; it reads APSNHSITTKPLATEATSQAPRQ. Asn-145 and Asn-180 each carry an N-linked (GlcNAc...) asparagine glycan. The segment covering 234–244 has biased composition (polar residues); sequence PVASSAETQGM. Residues 289–300 are compositionally biased toward low complexity; the sequence is TSSSTELASTAL. Residue Asn-333 is glycosylated (N-linked (GlcNAc...) asparagine). Residues 453-473 form a helical membrane-spanning segment; that stretch reads LPLIITIVCMASFLLLVAALY. At 474–551 the chain is on the cytoplasmic side; it reads GCCHQRLSHR…DLDEEEDTHL (78 aa). Thr-511 bears the Phosphothreonine mark. The residue at position 530 (Ser-530) is a Phosphoserine. A Phosphothreonine modification is found at Thr-549.

Belongs to the podocalyxin family. In terms of assembly, monomer; when associated with the membrane raft. Oligomer; when integrated in the apical membrane. Found in a complex with EZR, PODXL and NHERF2. Associates with the actin cytoskeleton through complex formation with EZR and NHERF2. Interacts (via the C-terminal PDZ-binding motif DTHL) with NHERF1 (via the PDZ domains); interaction is not detected in glomerular epithelium cells, take place early in the secretory pathway and is necessary for its apical membrane sorting. Interacts (via the C-terminal PDZ-binding motif DTHL) with NHERF2 (via the PDZ 1 domain); interaction is detected in glomerular epithelium cells. Interacts with EZR. In terms of processing, N- and O-linked glycosylated. Sialoglycoprotein. Glomerular epithelium cell (podocyte) and endothelial cells.

It localises to the apical cell membrane. It is found in the cell projection. The protein localises to the microvillus. The protein resides in the membrane raft. Its subcellular location is the lamellipodium. It localises to the filopodium. It is found in the ruffle. The protein localises to the membrane. Involved in the regulation of both adhesion and cell morphology and cancer progression. Functions as an anti-adhesive molecule that maintains an open filtration pathway between neighboring foot processes in the podocyte by charge repulsion. Acts as a pro-adhesive molecule, enhancing the adherence of cells to immobilized ligands, increasing the rate of migration and cell-cell contacts in an integrin-dependent manner. Induces the formation of apical actin-dependent microvilli. Involved in the formation of a preapical plasma membrane subdomain to set up initial epithelial polarization and the apical lumen formation during renal tubulogenesis. Plays a role in cancer development and aggressiveness by inducing cell migration and invasion through its interaction with the actin-binding protein EZR. Affects EZR-dependent signaling events, leading to increased activities of the MAPK and PI3K pathways in cancer cells. The protein is Podocalyxin (PODXL) of Oryctolagus cuniculus (Rabbit).